Here is an 84-residue protein sequence, read N- to C-terminus: Small ribosomal subunit protein bS18 (84 aa).

The protein belongs to the bacterial ribosomal protein bS18 family. Part of the 30S ribosomal subunit. Forms a tight heterodimer with protein bS6.

In terms of biological role, binds as a heterodimer with protein bS6 to the central domain of the 16S rRNA, where it helps stabilize the platform of the 30S subunit. The polypeptide is Small ribosomal subunit protein bS18 (Mycobacterium leprae (strain Br4923)).